A 550-amino-acid chain; its full sequence is Hydroxylamine reductase (550 aa).

Residues Cys3, Cys6, Cys18, and Cys25 each coordinate [2Fe-2S] cluster. Residues His249, Glu273, Cys317, Cys405, Cys433, Cys458, Glu492, and Lys494 each coordinate hybrid [4Fe-2O-2S] cluster. At Cys405 the chain carries Cysteine persulfide.

Belongs to the HCP family. Requires [2Fe-2S] cluster as cofactor. It depends on hybrid [4Fe-2O-2S] cluster as a cofactor.

The protein localises to the cytoplasm. The catalysed reaction is A + NH4(+) + H2O = hydroxylamine + AH2 + H(+). In terms of biological role, catalyzes the reduction of hydroxylamine to form NH(3) and H(2)O. This Salmonella typhi protein is Hydroxylamine reductase.